Here is a 284-residue protein sequence, read N- to C-terminus: uncharacterized protein (284 aa).

The first 24 residues, 1–24, serve as a signal peptide directing secretion; that stretch reads MLYSRESRTTVLFLALVTSLTVLC. The Cytoplasmic segment spans residues 25 to 84; it reads HSVDVTTVFTTSTITEITTVTAAPQPQNKAETALNTATNIIQTMQFLFNCAPFKWKGPLK. Residues 85–104 form a helical membrane-spanning segment; it reads ITSCALNFIVLLLTAWGYLL. The Extracellular portion of the chain corresponds to 105 to 284; that stretch reads KYLQENKLNS…SVHMYSSSLL (180 aa). An N-linked (GlcNAc...) asparagine glycan is attached at N270.

To yeast YNL033w.

The protein resides in the cell membrane. This is an uncharacterized protein from Saccharomyces cerevisiae (strain ATCC 204508 / S288c) (Baker's yeast).